The chain runs to 252 residues: Bidirectional sugar transporter SWEET3b (252 aa).

Over 1–8 (MVSNTIRV) the chain is Extracellular. The chain crosses the membrane as a helical span at residues 9-29 (AVGILGNAASMLLYAAPILTF). The MtN3/slv 1 domain maps to 10–98 (VGILGNAASM…SIYTWFAPRE (89 aa)). At 30–43 (RRVIKKGSVEEFSC) the chain is on the cytoplasmic side. A helical transmembrane segment spans residues 44-64 (VPYILALFNCLLYTWYGLPVV). Residues 65 to 75 (SSGWENSTVSS) are Extracellular-facing. N-linked (GlcNAc...) asparagine glycosylation is present at Asn-70. A helical transmembrane segment spans residues 76–96 (INGLGILLEIAFISIYTWFAP). The Cytoplasmic portion of the chain corresponds to 97-105 (RERKKFVLR). The helical transmembrane segment at 106–126 (MVLPVLAFFALTAIFSSFLFH) threads the bilayer. Residues 127 to 132 (THGLRK) lie on the Extracellular side of the membrane. A helical transmembrane segment spans residues 133-153 (VFVGSIGLVASISMYSSPMVA). The MtN3/slv 2 domain maps to 134–219 (FVGSIGLVAS…LYCIYRKSHK (86 aa)). Residues 154 to 167 (AKQVITTKSVEFMP) are Cytoplasmic-facing. A helical transmembrane segment spans residues 168–188 (FYLSLFSFLSSALWMIYGLLG). Residues 189–190 (KD) are Extracellular-facing. Residues 191–211 (LFIASPNFIGCPMGILQLVLY) form a helical membrane-spanning segment. Topologically, residues 212 to 252 (CIYRKSHKEAEKLHDIDQENGLKVVTTHEKITGREPEAQRD) are cytoplasmic.

This sequence belongs to the SWEET sugar transporter family. As to quaternary structure, forms homooligomers and/or heterooligomers.

The protein resides in the cell membrane. Functionally, mediates both low-affinity uptake and efflux of sugar across the plasma membrane. This Oryza sativa subsp. japonica (Rice) protein is Bidirectional sugar transporter SWEET3b (SWEET3B).